Consider the following 494-residue polypeptide: NAD(+) hydrolase ThsA (494 aa).

The Deacetylase sirtuin-type domain maps to A11–K295. 3 residues coordinate NAD(+): A30, D119, and H157. Residue H157 is the Proton acceptor of the active site. Residues I296–R494 are SLOG (STALD) domain, binds 3'cADPR. 8 residues coordinate 3'cADPR: G300, S301, L339, F370, R388, K405, G416, and E420.

The protein belongs to the soluble Thoeris ThsA family. Homotetramer.

The protein resides in the cytoplasm. It catalyses the reaction NAD(+) + H2O = ADP-D-ribose + nicotinamide + H(+). With respect to regulation, probably activated by a signal molecule generated by endogenous ThsB1 and/or ThsB2. Can also be activated by the signal generated by ThsB of B.cereus. The activating molecule might be 3' cyclic ADP-D-ribose (3'cADPR). Its function is as follows. Probable NAD(+) hydrolyzing component (NADase) of the Thoeris antiviral defense system, composed of ThsA, TIR1 (thsB1) and TIR2 (thsB2). Activated by a signal molecule generated by endogenous TIR1, TIR2 or ThsB from B.cereus. After activation it binds and hydrolyzes NAD(+), leading to cell death and inhibition of phage replication. Expression of Thoeris in B.subtilis (strain BEST7003) confers resistance to phages phi29, phi3T, SPBeta, SBSphi11, SBSphi13, SBSphiJ, SPO1 and SPR but not SBSphiC. The TIR paralogs confer overlapping resistance to different phages. The protein is NAD(+) hydrolase ThsA of Cytobacillus dafuensis (Bacillus dafuensis).